The following is a 182-amino-acid chain: tRNA-splicing endonuclease (182 aa).

Catalysis depends on residues Tyr119, His127, and Lys158.

This sequence belongs to the tRNA-intron endonuclease family. Archaeal short subfamily. In terms of assembly, homotetramer; although the tetramer contains four active sites, only two participate in the cleavage. Therefore, it should be considered as a dimer of dimers.

The enzyme catalyses pretRNA = a 3'-half-tRNA molecule with a 5'-OH end + a 5'-half-tRNA molecule with a 2',3'-cyclic phosphate end + an intron with a 2',3'-cyclic phosphate and a 5'-hydroxyl terminus.. Functionally, endonuclease that removes tRNA introns. Cleaves pre-tRNA at the 5'- and 3'-splice sites to release the intron. The products are an intron and two tRNA half-molecules bearing 2',3' cyclic phosphate and 5'-OH termini. Recognizes a pseudosymmetric substrate in which 2 bulged loops of 3 bases are separated by a stem of 4 bp. The protein is tRNA-splicing endonuclease of Saccharolobus islandicus (strain Y.N.15.51 / Yellowstone #2) (Sulfolobus islandicus).